The chain runs to 118 residues: Protein MT2260 (118 aa).

This sequence belongs to the HesB/IscA family.

This Mycobacterium tuberculosis (strain CDC 1551 / Oshkosh) protein is Protein MT2260.